We begin with the raw amino-acid sequence, 527 residues long: Bifunctional purine biosynthesis protein PurH (527 aa).

One can recognise an MGS-like domain in the interval 1 to 149; sequence MASDFLPVHR…KNFARVAVAT (149 aa).

It belongs to the PurH family.

The enzyme catalyses (6R)-10-formyltetrahydrofolate + 5-amino-1-(5-phospho-beta-D-ribosyl)imidazole-4-carboxamide = 5-formamido-1-(5-phospho-D-ribosyl)imidazole-4-carboxamide + (6S)-5,6,7,8-tetrahydrofolate. It carries out the reaction IMP + H2O = 5-formamido-1-(5-phospho-D-ribosyl)imidazole-4-carboxamide. Its pathway is purine metabolism; IMP biosynthesis via de novo pathway; 5-formamido-1-(5-phospho-D-ribosyl)imidazole-4-carboxamide from 5-amino-1-(5-phospho-D-ribosyl)imidazole-4-carboxamide (10-formyl THF route): step 1/1. It participates in purine metabolism; IMP biosynthesis via de novo pathway; IMP from 5-formamido-1-(5-phospho-D-ribosyl)imidazole-4-carboxamide: step 1/1. This chain is Bifunctional purine biosynthesis protein PurH, found in Xylella fastidiosa (strain 9a5c).